Here is a 335-residue protein sequence, read N- to C-terminus: L-threo-3-deoxy-hexylosonate aldolase (335 aa).

50-51 is a binding site for substrate; that stretch reads SN. The active-site Schiff-base intermediate with substrate is Lys175.

This sequence belongs to the DapA family.

It carries out the reaction 2-dehydro-3-deoxy-L-galactonate = L-glyceraldehyde + pyruvate. It participates in carbohydrate acid metabolism. Mediates the conversion of 2-dehydro-3-deoxy-L-galactonate to pyruvate and L-glyceraldehyde in D-galacturonate catabolic process. The polypeptide is L-threo-3-deoxy-hexylosonate aldolase (gaaC) (Aspergillus niger).